A 255-amino-acid chain; its full sequence is Triosephosphate isomerase (255 aa).

9 to 11 contributes to the substrate binding site; sequence NWK. Residue H95 is the Electrophile of the active site. Catalysis depends on E167, which acts as the Proton acceptor. Residues G173, S212, and 233–234 contribute to the substrate site; that span reads GG.

It belongs to the triosephosphate isomerase family. Homodimer.

The protein localises to the cytoplasm. The enzyme catalyses D-glyceraldehyde 3-phosphate = dihydroxyacetone phosphate. Its pathway is carbohydrate biosynthesis; gluconeogenesis. The protein operates within carbohydrate degradation; glycolysis; D-glyceraldehyde 3-phosphate from glycerone phosphate: step 1/1. Functionally, involved in the gluconeogenesis. Catalyzes stereospecifically the conversion of dihydroxyacetone phosphate (DHAP) to D-glyceraldehyde-3-phosphate (G3P). The polypeptide is Triosephosphate isomerase (Photorhabdus laumondii subsp. laumondii (strain DSM 15139 / CIP 105565 / TT01) (Photorhabdus luminescens subsp. laumondii)).